The following is a 351-amino-acid chain: Uroporphyrinogen decarboxylase (351 aa).

Residues 27-31 (RQAGR), D77, Y154, T209, and H327 each bind substrate.

It belongs to the uroporphyrinogen decarboxylase family. In terms of assembly, homodimer.

It is found in the cytoplasm. It catalyses the reaction uroporphyrinogen III + 4 H(+) = coproporphyrinogen III + 4 CO2. The protein operates within porphyrin-containing compound metabolism; protoporphyrin-IX biosynthesis; coproporphyrinogen-III from 5-aminolevulinate: step 4/4. Catalyzes the decarboxylation of four acetate groups of uroporphyrinogen-III to yield coproporphyrinogen-III. This is Uroporphyrinogen decarboxylase from Thioalkalivibrio sulfidiphilus (strain HL-EbGR7).